Here is a 347-residue protein sequence, read N- to C-terminus: Probable dual-specificity RNA methyltransferase RlmN (347 aa).

Glutamate 91 (proton acceptor) is an active-site residue. One can recognise a Radical SAM core domain in the interval 97 to 327 (YKYGNSICVS…ATVRREMGSD (231 aa)). Cysteines 104 and 332 form a disulfide. [4Fe-4S] cluster contacts are provided by cysteine 111, cysteine 115, and cysteine 118. S-adenosyl-L-methionine-binding positions include 158–159 (GE), serine 190, 213–215 (SLH), and asparagine 289. The S-methylcysteine intermediate role is filled by cysteine 332.

Belongs to the radical SAM superfamily. RlmN family. The cofactor is [4Fe-4S] cluster.

The protein resides in the cytoplasm. It carries out the reaction adenosine(2503) in 23S rRNA + 2 reduced [2Fe-2S]-[ferredoxin] + 2 S-adenosyl-L-methionine = 2-methyladenosine(2503) in 23S rRNA + 5'-deoxyadenosine + L-methionine + 2 oxidized [2Fe-2S]-[ferredoxin] + S-adenosyl-L-homocysteine. The enzyme catalyses adenosine(37) in tRNA + 2 reduced [2Fe-2S]-[ferredoxin] + 2 S-adenosyl-L-methionine = 2-methyladenosine(37) in tRNA + 5'-deoxyadenosine + L-methionine + 2 oxidized [2Fe-2S]-[ferredoxin] + S-adenosyl-L-homocysteine. Functionally, specifically methylates position 2 of adenine 2503 in 23S rRNA and position 2 of adenine 37 in tRNAs. The sequence is that of Probable dual-specificity RNA methyltransferase RlmN from Clostridium perfringens (strain SM101 / Type A).